We begin with the raw amino-acid sequence, 220 residues long: DNA replication complex GINS protein SLD5 (220 aa).

Belongs to the GINS4/SLD5 family. As to quaternary structure, component of the GINS complex. Interacts with EOL1 in the nucleus.

It is found in the nucleus. The GINS complex plays an essential role in the initiation of DNA replication. Required during embryogenesis. The protein is DNA replication complex GINS protein SLD5 of Arabidopsis thaliana (Mouse-ear cress).